The following is a 147-amino-acid chain: uncharacterized protein (147 aa).

Residues 3-23 form a helical membrane-spanning segment; that stretch reads APMVGMVVLVVTLGAAVLALS.

To M.tuberculosis Rv1312.

The protein resides in the membrane. This is an uncharacterized protein from Mycobacterium leprae (strain TN).